A 423-amino-acid chain; its full sequence is Type II methyltransferase M.NlaIV (423 aa).

Positions 4–423 (IKFIDLFSGM…AVSERLLHTL (420 aa)) constitute an SAM-dependent MTase C5-type domain. Residue Cys80 is part of the active site.

It belongs to the class I-like SAM-binding methyltransferase superfamily. C5-methyltransferase family.

It carries out the reaction a 2'-deoxycytidine in DNA + S-adenosyl-L-methionine = a 5-methyl-2'-deoxycytidine in DNA + S-adenosyl-L-homocysteine + H(+). In terms of biological role, a methylase that recognizes the double-stranded sequence 5'-GGNNCC-3', methylates C-? on both strands, and protects the DNA from cleavage by the NlaIV endonuclease. This is Type II methyltransferase M.NlaIV (nlaIVM) from Neisseria lactamica.